Here is a 137-residue protein sequence, read N- to C-terminus: DNA-binding protein H-NS (137 aa).

The DNA-binding element occupies 112–117 (QGRTPA).

Belongs to the histone-like protein H-NS family. In terms of assembly, homodimer that oligomerizes on DNA into higher-order complexes that form bridges between disparate regions of DNA compacting it. Interacts with Hha, Cnu and StpA.

The protein localises to the cytoplasm. Its subcellular location is the nucleoid. Its function is as follows. A DNA-binding protein implicated in transcriptional repression and chromosome organization and compaction. Binds nucleation sites in AT-rich DNA and bridges them, forming higher-order nucleoprotein complexes and condensing the chromosome. As many horizontally transferred genes are AT-rich, it plays a central role in silencing foreign genes. A subset of genes are repressed by H-NS in association with other proteins. The sequence is that of DNA-binding protein H-NS (hns) from Escherichia coli O6:H1 (strain CFT073 / ATCC 700928 / UPEC).